The sequence spans 463 residues: Exodeoxyribonuclease 7 large subunit (463 aa).

This sequence belongs to the XseA family. In terms of assembly, heterooligomer composed of large and small subunits.

It localises to the cytoplasm. The enzyme catalyses Exonucleolytic cleavage in either 5'- to 3'- or 3'- to 5'-direction to yield nucleoside 5'-phosphates.. In terms of biological role, bidirectionally degrades single-stranded DNA into large acid-insoluble oligonucleotides, which are then degraded further into small acid-soluble oligonucleotides. This is Exodeoxyribonuclease 7 large subunit from Klebsiella pneumoniae (strain 342).